A 73-amino-acid chain; its full sequence is Potassium channel toxin alpha-KTx 27.4 (73 aa).

An N-terminal signal peptide occupies residues 1–26; the sequence is MKFLFLTLVLLYFTAILVFIVFPSYA.

Belongs to the short scorpion toxin superfamily. Potassium channel inhibitor family. Alpha-KTx 27 subfamily. In terms of processing, contains 4 disulfide bonds. As to expression, expressed by the venom gland.

The protein resides in the secreted. This is Potassium channel toxin alpha-KTx 27.4 from Mesobuthus gibbosus (Mediterranean checkered scorpion).